Here is a 484-residue protein sequence, read N- to C-terminus: Aldehyde dehydrogenase family 3 member A2 (484 aa).

Residues 1–463 (MERQVQRLRQ…FLLKQFNKGR (463 aa)) are Cytoplasmic-facing. NAD(+) is bound at residue 185-190 (GNTAVG). Catalysis depends on residues Glu-207 and Cys-241. Ser-293 carries the phosphoserine modification. A helical membrane pass occupies residues 464–484 (LQLLLLVCLVAVAAVIVKDQL). Residues 481-484 (KDQL) carry the Prevents secretion from ER motif.

It belongs to the aldehyde dehydrogenase family. In terms of assembly, homodimer. The N-terminus is blocked.

The protein localises to the microsome membrane. It localises to the endoplasmic reticulum membrane. The enzyme catalyses an aldehyde + NAD(+) + H2O = a carboxylate + NADH + 2 H(+). The catalysed reaction is a fatty aldehyde + NAD(+) + H2O = a fatty acid + NADH + 2 H(+). It carries out the reaction (2E)-hexadecenal + NAD(+) + H2O = (E)-hexadec-2-enoate + NADH + 2 H(+). It catalyses the reaction hexadecanoate + NADH + 2 H(+) = hexadecanal + NAD(+) + H2O. The enzyme catalyses 22-oxodocosanoate + NAD(+) + H2O = docosanedioate + NADH + 2 H(+). The catalysed reaction is 2,6,10,14-tetramethylpentadecanal + NAD(+) + H2O = 2,6,10,14-tetramethylpentadecanoate + NADH + 2 H(+). It carries out the reaction octadecanal + NAD(+) + H2O = octadecanoate + NADH + 2 H(+). It catalyses the reaction dodecanoate + NADH + 2 H(+) = dodecanal + NAD(+) + H2O. The enzyme catalyses decanal + NAD(+) + H2O = decanoate + NADH + 2 H(+). The catalysed reaction is tetradecanal + NAD(+) + H2O = tetradecanoate + NADH + 2 H(+). It carries out the reaction octanal + NAD(+) + H2O = octanoate + NADH + 2 H(+). It catalyses the reaction heptanal + NAD(+) + H2O = heptanoate + NADH + 2 H(+). The enzyme catalyses (2E,6E)-farnesal + NAD(+) + H2O = (2E,6E)-farnesoate + NADH + 2 H(+). Functionally, catalyzes the oxidation of medium and long-chain aliphatic aldehydes to fatty acids. Active on a variety of saturated and unsaturated aliphatic aldehydes between 6 and 24 carbons in length. Responsible for conversion of the sphingosine 1-phosphate (S1P) degradation product hexadecenal to hexadecenoic acid. The chain is Aldehyde dehydrogenase family 3 member A2 (Aldh3a2) from Rattus norvegicus (Rat).